A 266-amino-acid chain; its full sequence is Protein PYRICULARIA ORYZAE RESISTANCE 21 (266 aa).

The 68-residue stretch at 1–68 (MGILVILVDL…IWCKAGKIIK (68 aa)) folds into the HMA domain. 2 residues coordinate a metal cation: Cys-12 and Cys-15. The segment at 129 to 156 (CEKPKPCEKPPPCKPEEPPKPPPEKPPP) is disordered. Basic and acidic residues predominate over residues 142–156 (KPEEPPKPPPEKPPP).

Its function is as follows. Involved in defense responses. Contributes to slowing defense responses toward Magnaporthe oryzae. The polypeptide is Protein PYRICULARIA ORYZAE RESISTANCE 21 (Oryza sativa subsp. japonica (Rice)).